The primary structure comprises 337 residues: tRNA N6-adenosine threonylcarbamoyltransferase (337 aa).

Residues histidine 111 and histidine 115 each coordinate Fe cation. Substrate contacts are provided by residues 134-138, aspartate 167, glycine 180, and asparagine 272; that span reads LVSGG. Aspartate 300 lines the Fe cation pocket.

This sequence belongs to the KAE1 / TsaD family. Requires Fe(2+) as cofactor.

It localises to the cytoplasm. The enzyme catalyses L-threonylcarbamoyladenylate + adenosine(37) in tRNA = N(6)-L-threonylcarbamoyladenosine(37) in tRNA + AMP + H(+). In terms of biological role, required for the formation of a threonylcarbamoyl group on adenosine at position 37 (t(6)A37) in tRNAs that read codons beginning with adenine. Is involved in the transfer of the threonylcarbamoyl moiety of threonylcarbamoyl-AMP (TC-AMP) to the N6 group of A37, together with TsaE and TsaB. TsaD likely plays a direct catalytic role in this reaction. In Salmonella choleraesuis (strain SC-B67), this protein is tRNA N6-adenosine threonylcarbamoyltransferase.